Reading from the N-terminus, the 147-residue chain is 3-dehydroquinate dehydratase (147 aa).

Tyr-24 acts as the Proton acceptor in catalysis. Residues Asn-75, His-81, and Asp-88 each coordinate substrate. Catalysis depends on His-101, which acts as the Proton donor. Substrate is bound by residues 102–103 (IS) and Arg-112.

The protein belongs to the type-II 3-dehydroquinase family. Homododecamer.

It catalyses the reaction 3-dehydroquinate = 3-dehydroshikimate + H2O. It functions in the pathway metabolic intermediate biosynthesis; chorismate biosynthesis; chorismate from D-erythrose 4-phosphate and phosphoenolpyruvate: step 3/7. In terms of biological role, catalyzes a trans-dehydration via an enolate intermediate. This chain is 3-dehydroquinate dehydratase, found in Cereibacter sphaeroides (strain KD131 / KCTC 12085) (Rhodobacter sphaeroides).